The chain runs to 266 residues: ATP synthase subunit a (266 aa).

Helical transmembrane passes span 41 to 61 (IDTLIMSFGLGALFCYVFWLA), 98 to 118 (VIAPLALTIFCWVFLSNLMDL), 119 to 139 (VPIDMVPSIMMAVGVDYWKIL), 152 to 172 (LSVLALIIIYGVMGQGVGGWL), 178 to 198 (HPLGPWLAPANLILNIVEFIA), 216 to 236 (LVFILISLLPWWIQWALGTPW), and 237 to 257 (AIFHILVVPLQAFIFMMLTVV).

Belongs to the ATPase A chain family. F-type ATPases have 2 components, CF(1) - the catalytic core - and CF(0) - the membrane proton channel. CF(1) has five subunits: alpha(3), beta(3), gamma(1), delta(1), epsilon(1). CF(0) has three main subunits: a(1), b(2) and c(9-12). The alpha and beta chains form an alternating ring which encloses part of the gamma chain. CF(1) is attached to CF(0) by a central stalk formed by the gamma and epsilon chains, while a peripheral stalk is formed by the delta and b chains.

It localises to the cell inner membrane. Its function is as follows. Key component of the proton channel; it plays a direct role in the translocation of protons across the membrane. The chain is ATP synthase subunit a from Halorhodospira halophila (strain DSM 244 / SL1) (Ectothiorhodospira halophila (strain DSM 244 / SL1)).